We begin with the raw amino-acid sequence, 779 residues long: Glutathione biosynthesis bifunctional protein GshAB (779 aa).

The glutamate--cysteine ligase stretch occupies residues 1 to 346 (MAFSKNILDS…ETANRNQEQA (346 aa)). In terms of domain architecture, ATP-grasp spans 512–768 (KKILDQAGIN…LDDKILDALG (257 aa)). 539–597 (PYYRGRAIVIKPKSTNFGIGITIIKENNRHDFFAQGIAQAFKHEATVLIENFSSGKEYR) is a binding site for ATP. Mg(2+) is bound by residues D719, E738, and N740. The Mn(2+) site is built by D719, E738, and N740.

The protein in the N-terminal section; belongs to the glutamate--cysteine ligase type 1 family. Type 2 subfamily. As to quaternary structure, monomer. Mg(2+) is required as a cofactor. Requires Mn(2+) as cofactor.

It catalyses the reaction L-cysteine + L-glutamate + ATP = gamma-L-glutamyl-L-cysteine + ADP + phosphate + H(+). The enzyme catalyses gamma-L-glutamyl-L-cysteine + glycine + ATP = glutathione + ADP + phosphate + H(+). The protein operates within sulfur metabolism; glutathione biosynthesis; glutathione from L-cysteine and L-glutamate: step 1/2. It participates in sulfur metabolism; glutathione biosynthesis; glutathione from L-cysteine and L-glutamate: step 2/2. Functionally, synthesizes glutathione from L-glutamate and L-cysteine via gamma-L-glutamyl-L-cysteine. In Desulfotalea psychrophila (strain LSv54 / DSM 12343), this protein is Glutathione biosynthesis bifunctional protein GshAB.